We begin with the raw amino-acid sequence, 309 residues long: Extracellular agarase (309 aa).

Positions 1–30 (MVNRRDLIKWSAVALGAGAGLAGPAPAAHA) form a signal peptide, tat-type signal. A GH16 domain is found at 33 to 309 (LEWEQYPVPA…YRWVRTYQAV (277 aa)). E155 serves as the catalytic Nucleophile. Catalysis depends on E160, which acts as the Proton donor.

Belongs to the glycosyl hydrolase 16 family. Post-translationally, predicted to be exported by the Tat system. The position of the signal peptide cleavage has been experimentally proven.

It localises to the secreted. It carries out the reaction Hydrolysis of (1-&gt;4)-beta-D-galactosidic linkages in agarose, giving the tetramer as the predominant product.. The polypeptide is Extracellular agarase (dagA) (Streptomyces coelicolor (strain ATCC BAA-471 / A3(2) / M145)).